Reading from the N-terminus, the 569-residue chain is Hemin/hemoglobin-binding protein 2 (569 aa).

The N-terminal stretch at 1–28 is a signal peptide; it reads MKKLWKKGLVAFLALTLIFQLIPGFASA. 3 consecutive NEAT domains span residues 34 to 173, 184 to 307, and 360 to 484; these read KDGG…FKVI, LSDG…ATAA, and LNNH…IKDI. Residues 204–205, Tyr280, and Tyr289 each bind heme; that span reads SS. A disordered region spans residues 307 to 357; the sequence is ASSYPGSDETPPVVNPGETNPPVTKPDPGTTNPPVTTPPTTPSKPAVVDPK. Residues 502 to 511 are compositionally biased toward polar residues; the sequence is TGNVASNNNA. The tract at residues 502-537 is disordered; that stretch reads TGNVASNNNAGPKLAKPDFDDTNSVQKTASKTEKNA. An NXZTN sorting signal motif is present at residues 536 to 540; it reads NAKTN. Thr539 is subject to Pentaglycyl murein peptidoglycan amidated threonine. The propeptide at 540–569 is removed by sortase B; the sequence is NDSSSMVWYITLFGASFLYLAYRLKRKRLS.

Its subcellular location is the cell surface. It localises to the secreted. The protein localises to the cell wall. Is overexpressed in mecA, clpC and clpP mutants, suggesting the protein level is controlled by MecA, ClpC and ClpP (at protein level). Acts as an extracellular and cell wall-bound hemophore; scavenges host heme and hemoglobin from the environment and also serves as a cell wall receptor for both. At low hemin (Hn) and hemoglobin (Hb) concentrations adsorbs Hn/Hb and presumably directs it to membrane transporters. Soluble Hbp2 can probably pass Hn/Hb to cell wall-anchored Hbp2, and both forms can accept Hn/Hb from Hbp1. May be involved in crossing the digestive barrier in infected animals. Binds host hemin. Binds host hemoglobin with affinity in the nanomolar range. This Listeria monocytogenes serovar 1/2a (strain ATCC BAA-679 / EGD-e) protein is Hemin/hemoglobin-binding protein 2.